Reading from the N-terminus, the 449-residue chain is UDP-N-acetylglucosamine 1-carboxyvinyltransferase (449 aa).

51 to 52 (KN) contacts phosphoenolpyruvate. UDP-N-acetyl-alpha-D-glucosamine is bound at residue R121. C145 functions as the Proton donor in the catalytic mechanism. Position 145 is a 2-(S-cysteinyl)pyruvic acid O-phosphothioketal (C145). Residues 150–154 (RPVDQ), D333, and I355 each bind UDP-N-acetyl-alpha-D-glucosamine.

It belongs to the EPSP synthase family. MurA subfamily.

The protein resides in the cytoplasm. It carries out the reaction phosphoenolpyruvate + UDP-N-acetyl-alpha-D-glucosamine = UDP-N-acetyl-3-O-(1-carboxyvinyl)-alpha-D-glucosamine + phosphate. It functions in the pathway cell wall biogenesis; peptidoglycan biosynthesis. Cell wall formation. Adds enolpyruvyl to UDP-N-acetylglucosamine. This Burkholderia mallei (strain ATCC 23344) protein is UDP-N-acetylglucosamine 1-carboxyvinyltransferase.